A 200-amino-acid polypeptide reads, in one-letter code: 6,7-dimethyl-8-ribityllumazine synthase (200 aa).

Residues Trp-25, 59–61, and 119–121 contribute to the 5-amino-6-(D-ribitylamino)uracil site; these read SWE and VLI. (2S)-2-hydroxy-3-oxobutyl phosphate is bound at residue 124–125; sequence ET. His-127 functions as the Proton donor in the catalytic mechanism. Phe-152 serves as a coordination point for 5-amino-6-(D-ribitylamino)uracil. Arg-166 contributes to the (2S)-2-hydroxy-3-oxobutyl phosphate binding site.

It belongs to the DMRL synthase family. Homopentamer.

It carries out the reaction (2S)-2-hydroxy-3-oxobutyl phosphate + 5-amino-6-(D-ribitylamino)uracil = 6,7-dimethyl-8-(1-D-ribityl)lumazine + phosphate + 2 H2O + H(+). It functions in the pathway cofactor biosynthesis; riboflavin biosynthesis; riboflavin from 2-hydroxy-3-oxobutyl phosphate and 5-amino-6-(D-ribitylamino)uracil: step 1/2. Catalyzes the formation of 6,7-dimethyl-8-ribityllumazine by condensation of 5-amino-6-(D-ribitylamino)uracil with 3,4-dihydroxy-2-butanone 4-phosphate. This is the penultimate step in the biosynthesis of riboflavin. The sequence is that of 6,7-dimethyl-8-ribityllumazine synthase from Pyricularia oryzae (strain 70-15 / ATCC MYA-4617 / FGSC 8958) (Rice blast fungus).